Consider the following 325-residue polypeptide: NADH-quinone oxidoreductase subunit H (325 aa).

8 helical membrane passes run 11 to 31 (ILISVLKAVVILLVVVTCGAF), 81 to 101 (AIFTLAPVIAFTSLLLSFAIV), 114 to 134 (IGILFFLMMAGLAVYAVLFAG), 154 to 174 (LSYEVFLGLSLMGVVAQVGSF), 186 to 206 (VWNVIPQFFGFLTFAIAGVAV), 237 to 257 (FFVGEYIGIVTVSALIVTLFF), 265 to 285 (LPPFIWFALKTAFFMVMFILI), and 304 to 324 (VCLPLTLLNLLATAAVILYNA).

The protein belongs to the complex I subunit 1 family. In terms of assembly, NDH-1 is composed of 13 different subunits. Subunits NuoA, H, J, K, L, M, N constitute the membrane sector of the complex.

It is found in the cell inner membrane. The catalysed reaction is a quinone + NADH + 5 H(+)(in) = a quinol + NAD(+) + 4 H(+)(out). In terms of biological role, NDH-1 shuttles electrons from NADH, via FMN and iron-sulfur (Fe-S) centers, to quinones in the respiratory chain. The immediate electron acceptor for the enzyme in this species is believed to be ubiquinone. Couples the redox reaction to proton translocation (for every two electrons transferred, four hydrogen ions are translocated across the cytoplasmic membrane), and thus conserves the redox energy in a proton gradient. This subunit may bind ubiquinone. In Yersinia pseudotuberculosis serotype O:3 (strain YPIII), this protein is NADH-quinone oxidoreductase subunit H.